The sequence spans 338 residues: Ferredoxin--NADP reductase (338 aa).

FAD is bound by residues Thr-14, Asp-33, Gln-41, Tyr-46, Val-86, Phe-120, Asp-284, and Thr-325.

This sequence belongs to the ferredoxin--NADP reductase type 2 family. Homodimer. It depends on FAD as a cofactor.

The enzyme catalyses 2 reduced [2Fe-2S]-[ferredoxin] + NADP(+) + H(+) = 2 oxidized [2Fe-2S]-[ferredoxin] + NADPH. This is Ferredoxin--NADP reductase from Pelagibacter ubique (strain HTCC1062).